Reading from the N-terminus, the 29-residue chain is Dermaseptin-S5 (29 aa).

This sequence belongs to the frog skin active peptide (FSAP) family. Dermaseptin subfamily. Expressed by the skin glands.

Its subcellular location is the secreted. Functionally, potent antimicrobial peptide with activity against bacteria and protozoa. Also has activity against fungi. Probably acts by disturbing membrane functions with its amphipathic structure. This is Dermaseptin-S5 from Phyllomedusa sauvagei (Sauvage's leaf frog).